The primary structure comprises 494 residues: uncharacterized protein (494 aa).

VOC domains lie at 18 to 174 (FIDC…FINR) and 229 to 408 (SLDH…FGIL). Fe cation contacts are provided by histidine 232, histidine 349, and glutamate 460.

Belongs to the 4HPPD family. Requires Fe cation as cofactor.

May have dioxygenase activity. This is an uncharacterized protein from Dictyostelium discoideum (Social amoeba).